A 179-amino-acid chain; its full sequence is Endoribonuclease YbeY (179 aa).

Zn(2+)-binding residues include His148, His152, and His158.

The protein belongs to the endoribonuclease YbeY family. Requires Zn(2+) as cofactor.

Its subcellular location is the cytoplasm. Functionally, single strand-specific metallo-endoribonuclease involved in late-stage 70S ribosome quality control and in maturation of the 3' terminus of the 16S rRNA. The chain is Endoribonuclease YbeY from Prochlorococcus marinus (strain MIT 9215).